A 448-amino-acid polypeptide reads, in one-letter code: Zinc finger and BTB domain-containing protein 44 (448 aa).

The region spanning 31 to 98 is the BTB domain; that stretch reads CDITIRVQDK…AYTATLSINT (68 aa). A compositionally biased stretch (basic and acidic residues) spans 289–298; sequence LSDEEVHEEV. The segment at 289–320 is disordered; sequence LSDEEVHEEVSQPVSASQSSMSDQQTVPGSEQ. Over residues 299–313 the composition is skewed to low complexity; that stretch reads SQPVSASQSSMSDQQ. 2 C2H2-type zinc fingers span residues 394-416 and 422-444; these read FQCP…MLIH and FQCD…RLKH.

It localises to the nucleus. This Xenopus tropicalis (Western clawed frog) protein is Zinc finger and BTB domain-containing protein 44 (zbtb44).